A 222-amino-acid chain; its full sequence is Triosephosphate isomerase (222 aa).

9 to 11 lines the substrate pocket; that stretch reads NYK. Histidine 93 acts as the Electrophile in catalysis. Catalysis depends on glutamate 141, which acts as the Proton acceptor. Residues isoleucine 146, glycine 181, and 202 to 203 contribute to the substrate site; that span reads AS.

This sequence belongs to the triosephosphate isomerase family. Homotetramer; dimer of dimers.

Its subcellular location is the cytoplasm. The enzyme catalyses D-glyceraldehyde 3-phosphate = dihydroxyacetone phosphate. The protein operates within carbohydrate biosynthesis; gluconeogenesis. It functions in the pathway carbohydrate degradation; glycolysis; D-glyceraldehyde 3-phosphate from glycerone phosphate: step 1/1. Involved in the gluconeogenesis. Catalyzes stereospecifically the conversion of dihydroxyacetone phosphate (DHAP) to D-glyceraldehyde-3-phosphate (G3P). The chain is Triosephosphate isomerase from Methanosarcina mazei (strain ATCC BAA-159 / DSM 3647 / Goe1 / Go1 / JCM 11833 / OCM 88) (Methanosarcina frisia).